Reading from the N-terminus, the 502-residue chain is Ubiquitin-like-specific protease 1A (502 aa).

Catalysis depends on residues histidine 393, aspartate 410, and cysteine 461.

The protein belongs to the peptidase C48 family.

In terms of biological role, protease that catalyzes two essential functions in the SUMO pathway: processing of full-length SUMOs to their mature forms and deconjugation of SUMO from targeted proteins. Cleaves precursors of SUM1 and SUM2, and very inefficiently of SUM3. Seems to be the only ULP1 able to cleave SUM3 precursors. Cleaves SUMO peptides better than SUMO-conjugated proteins. In Arabidopsis thaliana (Mouse-ear cress), this protein is Ubiquitin-like-specific protease 1A (ULP1A).